The chain runs to 467 residues: UDP-N-acetylmuramate--L-alanine ligase (467 aa).

Residue 114–120 (GTHGKTT) participates in ATP binding.

This sequence belongs to the MurCDEF family.

The protein localises to the cytoplasm. The enzyme catalyses UDP-N-acetyl-alpha-D-muramate + L-alanine + ATP = UDP-N-acetyl-alpha-D-muramoyl-L-alanine + ADP + phosphate + H(+). The protein operates within cell wall biogenesis; peptidoglycan biosynthesis. Cell wall formation. The chain is UDP-N-acetylmuramate--L-alanine ligase from Rhodopseudomonas palustris (strain BisB5).